The chain runs to 276 residues: C-type lectin domain family 12 member B (276 aa).

The Cytoplasmic segment spans residues 1–43 (MSEEVTYATLTFQDSAGARNNRDGNNLRKRGHPAPSPIWRHAA). Residues 5–10 (VTYATL) carry the ITIM motif motif. Tyr-7 is subject to Phosphotyrosine. Residues 44 to 64 (LGLVTLCLMLLIGLVTLGMMF) traverse the membrane as a helical; Signal-anchor for type II membrane protein segment. At 65 to 276 (LQISNDINSD…AAPVKTEDLD (212 aa)) the chain is on the extracellular side. N-linked (GlcNAc...) asparagine glycans are attached at residues Asn-91, Asn-176, and Asn-237. The C-type lectin domain occupies 150-264 (YQNSCYYFTT…CSAEIFWICE (115 aa)). 2 cysteine pairs are disulfide-bonded: Cys-172-Cys-263 and Cys-242-Cys-255.

Homodimer. Interacts (via ITIM motif) with PTPN6. Interacts (via ITIM motif) with PTPN11; this interaction triggers dephosphorylation and activation of PTPN11. In terms of processing, N-glycosylated. In terms of tissue distribution, detected in colon, heart, kidney, liver, lung, mammary gland, ovary, spleen and testis. Expressed in melanocytes (at protein level).

It localises to the cell membrane. Its function is as follows. Inhibitory receptor postulated to negatively regulate immune and non-immune functions. Upon phosphorylation, recruits SH2 domain-containing PTPN6 and PTPN11 phosphatases to its ITIM motif and antagonizes activation signals. Although it inhibits KLRK1/NKG2D-mediated signaling, it does not bind known ligands of KLRK1/NKG2D and therefore is not its inhibitory counterpart. May limit activation of myeloid cell subsets in response to infection or tissue inflammation. May protect target cells against natural killer cell-mediated lysis. May negatively regulate cell cycle and differentiation of melanocytes via inactivation of STAT3. The protein is C-type lectin domain family 12 member B of Homo sapiens (Human).